Reading from the N-terminus, the 776-residue chain is Glutathione biosynthesis bifunctional protein GshAB (776 aa).

The segment at 1–354 (MIKLDMTILD…QLADENENNI (354 aa)) is glutamate--cysteine ligase. The 255-residue stretch at 521 to 775 (KLVLAENNIR…IGDKILDFLF (255 aa)) folds into the ATP-grasp domain. 548–606 (SLFKDKQIVVKPKSTNYGWGISIFKNKFTTEDYQEALNIAFSYDSSVIIEEFIPGDEFR) lines the ATP pocket. Positions 728, 745, and 747 each coordinate Mg(2+). Mn(2+)-binding residues include Asp728, Glu745, and Asn747.

It in the N-terminal section; belongs to the glutamate--cysteine ligase type 1 family. Type 2 subfamily. In terms of assembly, monomer. Mg(2+) is required as a cofactor. It depends on Mn(2+) as a cofactor.

It carries out the reaction L-cysteine + L-glutamate + ATP = gamma-L-glutamyl-L-cysteine + ADP + phosphate + H(+). It catalyses the reaction gamma-L-glutamyl-L-cysteine + glycine + ATP = glutathione + ADP + phosphate + H(+). It functions in the pathway sulfur metabolism; glutathione biosynthesis; glutathione from L-cysteine and L-glutamate: step 1/2. The protein operates within sulfur metabolism; glutathione biosynthesis; glutathione from L-cysteine and L-glutamate: step 2/2. Its function is as follows. Synthesizes glutathione from L-glutamate and L-cysteine via gamma-L-glutamyl-L-cysteine. The sequence is that of Glutathione biosynthesis bifunctional protein GshAB from Listeria welshimeri serovar 6b (strain ATCC 35897 / DSM 20650 / CCUG 15529 / CIP 8149 / NCTC 11857 / SLCC 5334 / V8).